The chain runs to 63 residues: MSNTQLLEVLGTETFDVQEDLFAFDTTDTTIVASNDDPDTRFKSWSLCTPGCARTGSFNSYCC.

The propeptide occupies 1-41; it reads MSNTQLLEVLGTETFDVQEDLFAFDTTDTTIVASNDDPDTR. Positions 44–48 form a cross-link, lanthionine (Ser-Cys); it reads SWSLC. Ser-46 is subject to 2,3-didehydroalanine (Ser). Positions 49 to 52 form a cross-link, beta-methyllanthionine (Thr-Cys); that stretch reads TPGC. Residue Thr-55 is modified to 2,3-didehydrobutyrine. The segment at residues 57–62 is a cross-link (lanthionine (Ser-Cys)); the sequence is SFNSYC. The S-(2-aminovinyl)-D-cysteine (Ser-Cys) cross-link spans 60–63; sequence SYCC.

It belongs to the type A lantibiotic family. In terms of processing, maturation of lantibiotics involves the enzymatic conversion of Thr, and Ser into dehydrated AA and the formation of thioether bonds with cysteine. The C-terminal lanthionine undergoes decarboxylation. This is followed by membrane translocation and cleavage of the modified precursor. The structure of the 2,3-didehydrobutyrine is not discussed in PubMed:11082191.

Lanthionine-containing peptide antibiotic (lantibiotic) active on Gram-positive bacteria. The bactericidal activity of lantibiotics is based on depolarization of energized bacterial cytoplasmic membranes, initiated by the formation of aqueous transmembrane pores. The chain is Lantibiotic mutacin-1140 (lanA) from Streptococcus mutans.